A 272-amino-acid chain; its full sequence is MSIWRPPLHNVPGLEHLWYESVHRSHAAVCGCGDPVRHLTALAERYGIPGGSRSSGAPGVGGNHNPPQIRRARHPAAAPDPPAGNQPPALPWHGDGGNESGAGGGESGGPVADFADDGLDDLVAALDEEELLKTPAPSPPLKYPVAVTSLAEYKSSIRKSSDPATVSDPLTSDVTCLAARVLKESQNNKRLLSFYSPAANAPGSTFPSTSRQKKTSISKRDNKENRDRGRAKARAKQKPKKRRRRARSESSSSSSSKSSFNSEEGSSASSSS.

Disordered regions lie at residues glycine 50 to aspartate 116 and tyrosine 195 to serine 272. Residues alanine 78 to leucine 90 show a composition bias toward pro residues. Residues glycine 94 to glycine 108 are compositionally biased toward gly residues. The segment covering serine 218–arginine 230 has biased composition (basic and acidic residues). The segment covering alanine 231–alanine 246 has biased composition (basic residues). Over residues glutamate 249–serine 272 the composition is skewed to low complexity.

Phosphorylated at C-terminal serines.

The protein is Probable protein VP2 of Homo sapiens (Human).